Reading from the N-terminus, the 384-residue chain is Probable zinc-binding alcohol dehydrogenase Rv1895 (384 aa).

Zn(2+) contacts are provided by Cys38, His59, Cys89, Cys92, Cys95, and Cys103.

This sequence belongs to the zinc-containing alcohol dehydrogenase family. Requires Zn(2+) as cofactor.

It catalyses the reaction a primary alcohol + NAD(+) = an aldehyde + NADH + H(+). The enzyme catalyses a secondary alcohol + NAD(+) = a ketone + NADH + H(+). The chain is Probable zinc-binding alcohol dehydrogenase Rv1895 from Mycobacterium tuberculosis (strain ATCC 25618 / H37Rv).